A 375-amino-acid chain; its full sequence is Flagellin (375 aa).

Belongs to the bacterial flagellin family.

Its subcellular location is the secreted. The protein localises to the bacterial flagellum. Flagellin is the subunit protein which polymerizes to form the filaments of bacterial flagella. Flagella are an important component in the invasiveness of B.bacilliformis. In Bartonella bacilliformis, this protein is Flagellin.